Here is a 316-residue protein sequence, read N- to C-terminus: Methionyl-tRNA formyltransferase (316 aa).

112–115 (SLLP) is a (6S)-5,6,7,8-tetrahydrofolate binding site.

It belongs to the Fmt family.

It carries out the reaction L-methionyl-tRNA(fMet) + (6R)-10-formyltetrahydrofolate = N-formyl-L-methionyl-tRNA(fMet) + (6S)-5,6,7,8-tetrahydrofolate + H(+). Functionally, attaches a formyl group to the free amino group of methionyl-tRNA(fMet). The formyl group appears to play a dual role in the initiator identity of N-formylmethionyl-tRNA by promoting its recognition by IF2 and preventing the misappropriation of this tRNA by the elongation apparatus. In Haemophilus ducreyi (strain 35000HP / ATCC 700724), this protein is Methionyl-tRNA formyltransferase.